Reading from the N-terminus, the 290-residue chain is Phosphoribulokinase 1 (290 aa).

ATP is bound at residue 12–20; the sequence is GSSGAGTST.

The protein belongs to the phosphoribulokinase family. In terms of assembly, homooctamer.

The enzyme catalyses D-ribulose 5-phosphate + ATP = D-ribulose 1,5-bisphosphate + ADP + H(+). It functions in the pathway carbohydrate biosynthesis; Calvin cycle. Activated by NADH and inhibited by phosphoenolpyruvate. This Cereibacter sphaeroides (Rhodobacter sphaeroides) protein is Phosphoribulokinase 1 (prkA).